The following is a 280-amino-acid chain: UPF0758 protein Atu1607 (280 aa).

The interval 1 to 22 is disordered; sequence MAKRPALPSADLSPTSGFEAGE. The 123-residue stretch at 158–280 folds into the MPN domain; the sequence is VLGSWSSVID…HASFKGLRLI (123 aa). His-229, His-231, and Asp-242 together coordinate Zn(2+). The short motif at 229–242 is the JAMM motif element; the sequence is HNHPSGDPTPSRAD.

It belongs to the UPF0758 family.

The protein is UPF0758 protein Atu1607 of Agrobacterium fabrum (strain C58 / ATCC 33970) (Agrobacterium tumefaciens (strain C58)).